A 255-amino-acid chain; its full sequence is Zinc-finger homeodomain protein 6 (255 aa).

Residues 1–35 form a disordered region; that stretch reads MEFRGHDEPVDEMGVAYGRTPPSSSSSPAASASAG. Residues 21–35 are compositionally biased toward low complexity; it reads PPSSSSSPAASASAG. A ZF-HD dimerization-type; degenerate zinc finger spans residues 45 to 93; that stretch reads YHECLRNHAAAMGGHVVDGCREFMPMPGDAADALKCAACGCHRSFHRKD. Pro residues predominate over residues 106–126; that stretch reads PSPPTPRVPLLMPPPQPQPHP. Disordered regions lie at residues 106-181 and 226-255; these read PSPP…KFTP and NNKSSIGSSSGGGSRRQPQEQQSQQQQQQQ. The segment covering 139–153 has biased composition (low complexity); it reads YHHTPSGSGGTTTES. The segment at residues 172–235 is a DNA-binding region (homeobox); sequence RKRFRTKFTP…NNKSSIGSSS (64 aa). Over residues 240–255 the composition is skewed to low complexity; the sequence is RRQPQEQQSQQQQQQQ.

Homo- and heterodimer with other ZFHD proteins.

It localises to the nucleus. Its function is as follows. Putative transcription factor. The protein is Zinc-finger homeodomain protein 6 (ZHD6) of Oryza sativa subsp. japonica (Rice).